We begin with the raw amino-acid sequence, 351 residues long: Selenide, water dikinase (351 aa).

U15 is a catalytic residue. Residue U15 is a non-standard amino acid, selenocysteine. Residues K18 and 47–49 (DNE) each bind ATP. Residue D50 coordinates Mg(2+). Residues D67, D90, and 138 to 140 (GHS) each bind ATP. D90 provides a ligand contact to Mg(2+). Position 227 (D227) interacts with Mg(2+).

This sequence belongs to the selenophosphate synthase 1 family. Class I subfamily. As to quaternary structure, homodimer. Mg(2+) is required as a cofactor.

The catalysed reaction is hydrogenselenide + ATP + H2O = selenophosphate + AMP + phosphate + 2 H(+). In terms of biological role, synthesizes selenophosphate from selenide and ATP. This is Selenide, water dikinase from Nitratidesulfovibrio vulgaris (strain DP4) (Desulfovibrio vulgaris).